The chain runs to 872 residues: Alanine--tRNA ligase (872 aa).

Positions 561, 565, 662, and 666 each coordinate Zn(2+).

This sequence belongs to the class-II aminoacyl-tRNA synthetase family. Requires Zn(2+) as cofactor.

It is found in the cytoplasm. The enzyme catalyses tRNA(Ala) + L-alanine + ATP = L-alanyl-tRNA(Ala) + AMP + diphosphate. Its function is as follows. Catalyzes the attachment of alanine to tRNA(Ala) in a two-step reaction: alanine is first activated by ATP to form Ala-AMP and then transferred to the acceptor end of tRNA(Ala). Also edits incorrectly charged Ser-tRNA(Ala) and Gly-tRNA(Ala) via its editing domain. The protein is Alanine--tRNA ligase of Thiobacillus denitrificans (strain ATCC 25259 / T1).